The primary structure comprises 232 residues: 5'-methylthioadenosine/S-adenosylhomocysteine nucleosidase (232 aa).

E12 (proton acceptor) is an active-site residue. Residues G78, I152, and 173–174 (ME) each bind substrate. The active-site Proton donor is the D197.

This sequence belongs to the PNP/UDP phosphorylase family. MtnN subfamily. Homodimer.

The catalysed reaction is S-adenosyl-L-homocysteine + H2O = S-(5-deoxy-D-ribos-5-yl)-L-homocysteine + adenine. The enzyme catalyses S-methyl-5'-thioadenosine + H2O = 5-(methylsulfanyl)-D-ribose + adenine. It catalyses the reaction 5'-deoxyadenosine + H2O = 5-deoxy-D-ribose + adenine. It functions in the pathway amino-acid biosynthesis; L-methionine biosynthesis via salvage pathway; S-methyl-5-thio-alpha-D-ribose 1-phosphate from S-methyl-5'-thioadenosine (hydrolase route): step 1/2. Functionally, catalyzes the irreversible cleavage of the glycosidic bond in both 5'-methylthioadenosine (MTA) and S-adenosylhomocysteine (SAH/AdoHcy) to adenine and the corresponding thioribose, 5'-methylthioribose and S-ribosylhomocysteine, respectively. Also cleaves 5'-deoxyadenosine, a toxic by-product of radical S-adenosylmethionine (SAM) enzymes, into 5-deoxyribose and adenine. Thus, is required for in vivo function of the radical SAM enzymes biotin synthase and lipoic acid synthase, that are inhibited by 5'-deoxyadenosine accumulation. The chain is 5'-methylthioadenosine/S-adenosylhomocysteine nucleosidase from Enterobacter sp. (strain 638).